The following is a 283-amino-acid chain: Chromatin modification-related protein png1 (283 aa).

The segment covering 137–171 (YSPSGASSARQTPAPSRSGASTAGRRRTSATTRGA) has biased composition (low complexity). The segment at 137-224 (YSPSGASSAR…NEMVSEEDME (88 aa)) is disordered. Over residues 181-216 (YTASLADSGSTRGQKVSNATATTQLETKADSTTPNE) the composition is skewed to polar residues. A PHD-type zinc finger spans residues 228-277 (EKYCFCQQGSYGQMVACDNANCEREWFHMECVGLKAPPEGTWYCEACRDQ). Residues Cys231, Cys233, Cys244, Cys249, His255, Cys258, Cys271, and Cys274 each coordinate Zn(2+).

Belongs to the ING family. As to quaternary structure, interacts with H3K4me3 and to a lesser extent with H3K4me2. Component of a histone deacetylase complex.

It is found in the nucleus. Its function is as follows. Component of a histone deacetylase complex responsible for the deacetylation of lysine residues on the N-terminal part of the core histones (H2A, H2B, H3 and H4). Histone deacetylation gives a tag for epigenetic repression and plays an important role in transcriptional regulation, cell cycle progression and developmental events. Has a role in silencing of mating type genes. This is Chromatin modification-related protein png1 (png1) from Schizosaccharomyces pombe (strain 972 / ATCC 24843) (Fission yeast).